Here is a 226-residue protein sequence, read N- to C-terminus: Deoxyribose-phosphate aldolase (226 aa).

Aspartate 84 (proton donor/acceptor) is an active-site residue. The active-site Schiff-base intermediate with acetaldehyde is lysine 146. The Proton donor/acceptor role is filled by lysine 188.

Belongs to the DeoC/FbaB aldolase family. DeoC type 1 subfamily. Homodimer.

It is found in the cytoplasm. It catalyses the reaction 2-deoxy-D-ribose 5-phosphate = D-glyceraldehyde 3-phosphate + acetaldehyde. The protein operates within carbohydrate degradation; 2-deoxy-D-ribose 1-phosphate degradation; D-glyceraldehyde 3-phosphate and acetaldehyde from 2-deoxy-alpha-D-ribose 1-phosphate: step 2/2. Catalyzes a reversible aldol reaction between acetaldehyde and D-glyceraldehyde 3-phosphate to generate 2-deoxy-D-ribose 5-phosphate. In Pyrobaculum aerophilum (strain ATCC 51768 / DSM 7523 / JCM 9630 / CIP 104966 / NBRC 100827 / IM2), this protein is Deoxyribose-phosphate aldolase.